Reading from the N-terminus, the 556-residue chain is Putative solute carrier family 22 member 31 (556 aa).

The Cytoplasmic segment spans residues 1–23 (MEQEARVLRAAGGFGRARRLLAS). A helical membrane pass occupies residues 24–44 (ASWVPCIVLGLVLSSEELLTA). At 45 to 128 (QPAPHCRPDP…WNLVCGDGWK (84 aa)) the chain is on the extracellular side. Residues 129–149 (VPLEQVSHLLGWLLGCVILGA) traverse the membrane as a helical segment. Over 150–157 (GCDRFGRR) the chain is Cytoplasmic. A helical membrane pass occupies residues 158–178 (AVFVASLVLTTGLGASEALAA). Residues 179 to 182 (SFPT) are Extracellular-facing. The chain crosses the membrane as a helical span at residues 183-203 (LLVLRLLHGGTLAGALLALYL). Over 204-218 (ARLELCDPPHRLAFS) the chain is Cytoplasmic. A helical membrane pass occupies residues 219-239 (MGAGLFSVVGTLLLPGLAALV). Over 240–246 (QDWRLLQ) the chain is Extracellular. A helical transmembrane segment spans residues 247 to 267 (GLGALMSGLLLLFWGFPALFP). Residues 268 to 339 (ESPCWLLATG…LRTRVTWRNG (72 aa)) lie on the Cytoplasmic side of the membrane. The helical transmembrane segment at 340-357 (LILGFSSLVGGGIRASFR) threads the bilayer. Residues 358–366 (RSLAPQVPT) lie on the Extracellular side of the membrane. A helical transmembrane segment spans residues 367–387 (FYLPYFLEAGLEAAALVFLLL). Over 388-395 (TADCCGRR) the chain is Cytoplasmic. The chain crosses the membrane as a helical span at residues 396–416 (PVLLLGTMVTGLASLLLLAGA). Residues 417 to 420 (QYLP) lie on the Extracellular side of the membrane. Residues 421 to 441 (GWTVLFLSVLGLLASRAVSAL) traverse the membrane as a helical segment. Residues 442-448 (SSLFAAE) are Cytoplasmic-facing. The helical transmembrane segment at 449–469 (VFPTVIRGAGLGLVLGAGFLG) threads the bilayer. At 470–483 (QAAGPLDTLHGRQG) the chain is on the extracellular side. Residues 484-504 (FFLQQVVFASLAVLALLCVLL) form a helical membrane-spanning segment. Residues 505 to 556 (LPESRSRGLPQSLQDADRLRRSPLLRGRPRQDHLPLLPPSNSYWAGHTPEQH) are Cytoplasmic-facing. The segment at 524-556 (RRSPLLRGRPRQDHLPLLPPSNSYWAGHTPEQH) is disordered.

The protein belongs to the major facilitator (TC 2.A.1) superfamily. Organic cation transporter (TC 2.A.1.19) family.

Its subcellular location is the membrane. Organic anion transporter that mediates the uptake of ions. In Homo sapiens (Human), this protein is Putative solute carrier family 22 member 31.